Reading from the N-terminus, the 225-residue chain is Thymidine kinase (225 aa).

15 to 22 (GSMFSGKT) serves as a coordination point for ATP. The segment at 85-110 (KKQNHRTTTQCRSGDGTNNPGGVIPS) is disordered. Residues 90–104 (RTTTQCRSGDGTNNP) are compositionally biased toward polar residues. 121–124 (DEAN) provides a ligand contact to ATP. The active-site Proton acceptor is the glutamate 122. Residues cysteine 178, cysteine 181, cysteine 216, and cysteine 219 each contribute to the Zn(2+) site.

Belongs to the thymidine kinase family. Homotetramer.

The protein resides in the cytoplasm. It carries out the reaction thymidine + ATP = dTMP + ADP + H(+). The sequence is that of Thymidine kinase from Haloquadratum walsbyi (strain DSM 16790 / HBSQ001).